The chain runs to 474 residues: Glutamate--tRNA ligase (474 aa).

Residues 9–19 (PSPTGLLHMGG) carry the 'HIGH' region motif. The 'KMSKS' region motif lies at 238 to 242 (KLSKR). Lysine 241 contributes to the ATP binding site.

This sequence belongs to the class-I aminoacyl-tRNA synthetase family. Glutamate--tRNA ligase type 1 subfamily. As to quaternary structure, monomer.

It is found in the cytoplasm. It carries out the reaction tRNA(Glu) + L-glutamate + ATP = L-glutamyl-tRNA(Glu) + AMP + diphosphate. Catalyzes the attachment of glutamate to tRNA(Glu) in a two-step reaction: glutamate is first activated by ATP to form Glu-AMP and then transferred to the acceptor end of tRNA(Glu). The chain is Glutamate--tRNA ligase from Buchnera aphidicola subsp. Cinara cedri (strain Cc).